Consider the following 2035-residue polypeptide: Ral GTPase-activating protein subunit alpha-1 (2035 aa).

The interval 343 to 384 (LVSREESKNDTVDKADKTAEPEQSHSNTSTLTEREPSSSSLC) is disordered. Positions 345 to 365 (SREESKNDTVDKADKTAEPEQ) are enriched in basic and acidic residues. Residues 366-384 (SHSNTSTLTEREPSSSSLC) are compositionally biased toward polar residues. Residues Ser-710 and Ser-720 each carry the phosphoserine modification. Residues 714 to 754 (SFSRGWSRDQPGQAPMRQRSATTTGSPGTEKARSIVRQKTV) are disordered. Position 753 is a phosphothreonine (Thr-753). The residue at position 772 (Ser-772) is a Phosphoserine. Phosphothreonine is present on Thr-777. Ser-796 carries the phosphoserine modification. Residues 807 to 817 (ERAKVNKEDTS) show a composition bias toward basic and acidic residues. 2 disordered regions span residues 807 to 834 (ERAK…SANV) and 848 to 911 (SGNA…SHSD). Composition is skewed to polar residues over residues 824-833 (NSETGGSSAN) and 849-862 (GNAS…SSPG). 3 positions are modified to phosphoserine: Ser-859, Ser-860, and Ser-863. Residues 894 to 911 (SPASAGSSDLMSSDSHSD) are compositionally biased toward low complexity. Phosphoserine is present on residues Ser-985, Ser-989, Ser-993, and Ser-999. The segment at 986–1008 (ESASPVHSALGSRSQTPSPSTLN) is disordered. Thr-1001 is subject to Phosphothreonine. Phosphoserine is present on residues Ser-1003 and Ser-1477. The tract at residues 1326 to 2034 (FTNKTVAHVA…PYHHFPADAD (709 aa)) is minimal domain that binds to TCF3/E12. The stretch at 1713 to 1746 (SEKQENDVINAILKQYTEEKEFVEKHFNDLNMKA) forms a coiled coil. The region spanning 1795–2003 (LRNLDSRQCR…EERARYLQTI (209 aa)) is the Rap-GAP domain.

Component of the heterodimeric RalGAP1 complex with RALGAPB. Heterodimerization is required for activity. Interacts with the HLH region of TCF3/isoform E12. In terms of tissue distribution, highly expressed in brain, thymus and testis with lower levels in lung and spleen and barely detectable in heart or liver (at protein level).

It is found in the cytoplasm. It localises to the nucleus. In terms of biological role, catalytic subunit of the heterodimeric RalGAP1 complex which acts as a GTPase activator for the Ras-like small GTPases RALA and RALB. The sequence is that of Ral GTPase-activating protein subunit alpha-1 (Ralgapa1) from Rattus norvegicus (Rat).